Reading from the N-terminus, the 476-residue chain is MASPFSGALQLTDLDDFIGPSQSCIKPVTVAKKPGSGIAKIHIEDDGSYFQVNPDGRSQKLEKAKVSLNDCLACSGCVTSAETILITQQSHEELRKVLDANKVAAPGQQRLVVVSVSPQSRASLAARFQLDSTDTARKLTSFFKKIGVHFVFDTAFARNFSLLESQKEFVQRFREQANSREALPMLASACPGWICYAEKTHGNFILPYISTARSPQQVMGSLIKDFFAQQQLLTPDKIYHVTVMPCYDKKLEASRPDFFNQEYQTRDVDCVLTTGEVFRLLEEEGVSLSELEPVPLDGLTRSVSAEEPTSHRGGGSGGYLEHVFRHAAQELFGIHVADVTYQPMRNKDFQEVTLEREGQVLLRFAVAYGFRNIQNLVQKLKRGRCPYHYVEVMACPSGCLNGGGQLKAPDTEGRELLQQVERLYSMVRTEAPEDAPGVQELYQHWLQGEDSERASHLLHTQYHAVEKINSGLSIRW.

Ala-2 is subject to N-acetylalanine. Residues Cys-24, Cys-71, Cys-74, Cys-77, Cys-190, Cys-246, Cys-395, and Cys-399 each contribute to the [4Fe-4S] cluster site.

This sequence belongs to the NARF family. External component of the CIA complex. In the CIA complex, interacts directly with CIAO1 and MMS19.

Functionally, component of the cytosolic iron-sulfur protein assembly (CIA) complex, a multiprotein complex that mediates the incorporation of iron-sulfur cluster into extramitochondrial Fe/S proteins. Seems to negatively regulate the level of HIF1A expression, although this effect could be indirect. This chain is Cytosolic iron-sulfur assembly component 3, found in Rattus norvegicus (Rat).